The sequence spans 314 residues: 3'-5' exoribonuclease YhaM (314 aa).

An HD domain is found at 163 to 279 (HVVSMLDLAK…LHYIDNLDAK (117 aa)).

The protein belongs to the YhaM family.

Its function is as follows. Shows a 3'-5' exoribonuclease activity. The sequence is that of 3'-5' exoribonuclease YhaM from Bacillus thuringiensis (strain Al Hakam).